A 397-amino-acid polypeptide reads, in one-letter code: Teichoic acid D-alanine hydrolase (397 aa).

The first 27 residues, 1–27 (MKFNKEKLVIHACVLLFIIISIGLVFH), serve as a signal peptide directing secretion.

Its subcellular location is the cell membrane. It catalyses the reaction [(4-D-Ala)-(2-GlcNAc)-Rib-ol-P]n-[Gro-P]m-beta-D-ManNAc-(1-&gt;4)-alpha-D-GlcNAc-P-peptidoglycan + n H2O = [(2-GlcNAc)-Rib-ol-P]n-[Gro-P]m-beta-D-ManNAc-(1-&gt;4)-alpha-D-GlcNAc-P-peptidoglycan + n D-alanine.. Catalyzes the liberation of D-alanyl moieties present on wall teichoic acid (WTA) and lipoteichoic acid (LTA). Affects the methicillin resistance level and autolysis in the presence of Triton X-100 as well as the cell wall structure. The chain is Teichoic acid D-alanine hydrolase (fmtA) from Staphylococcus aureus (strain MRSA252).